Consider the following 374-residue polypeptide: Fanconi anemia group F protein (374 aa).

As to quaternary structure, belongs to the multisubunit FA complex composed of FANCA, FANCB, FANCC, FANCE, FANCF, FANCG, FANCL/PHF9 and FANCM. The complex is not found in FA patients. In complex with FANCA, FANCG and FANCL, but not with FANCC, nor FANCE, interacts with HES1; this interaction may be essential for the stability and nuclear localization of FA core complex proteins.

It localises to the nucleus. DNA repair protein that may operate in a postreplication repair or a cell cycle checkpoint function. May be implicated in interstrand DNA cross-link repair and in the maintenance of normal chromosome stability. This Homo sapiens (Human) protein is Fanconi anemia group F protein (FANCF).